Here is a 100-residue protein sequence, read N- to C-terminus: Large ribosomal subunit protein uL23 (100 aa).

This sequence belongs to the universal ribosomal protein uL23 family. As to quaternary structure, part of the 50S ribosomal subunit. Contacts protein L29, and trigger factor when it is bound to the ribosome.

One of the early assembly proteins it binds 23S rRNA. One of the proteins that surrounds the polypeptide exit tunnel on the outside of the ribosome. Forms the main docking site for trigger factor binding to the ribosome. The sequence is that of Large ribosomal subunit protein uL23 from Rippkaea orientalis (strain PCC 8801 / RF-1) (Cyanothece sp. (strain PCC 8801)).